The sequence spans 409 residues: Dual-specificity RNA methyltransferase RlmN (409 aa).

The active-site Proton acceptor is Glu121. The 250-residue stretch at 127–376 folds into the Radical SAM core domain; it reads EEGRGTLCIS…IRTPRGRDIL (250 aa). A disulfide bridge links Cys134 with Cys379. [4Fe-4S] cluster-binding residues include Cys141, Cys145, and Cys148. Residues 205–206, Ser237, 259–261, and Asn336 each bind S-adenosyl-L-methionine; these read GE and SLH. Cys379 acts as the S-methylcysteine intermediate in catalysis.

Belongs to the radical SAM superfamily. RlmN family. [4Fe-4S] cluster serves as cofactor.

Its subcellular location is the cytoplasm. It carries out the reaction adenosine(2503) in 23S rRNA + 2 reduced [2Fe-2S]-[ferredoxin] + 2 S-adenosyl-L-methionine = 2-methyladenosine(2503) in 23S rRNA + 5'-deoxyadenosine + L-methionine + 2 oxidized [2Fe-2S]-[ferredoxin] + S-adenosyl-L-homocysteine. The enzyme catalyses adenosine(37) in tRNA + 2 reduced [2Fe-2S]-[ferredoxin] + 2 S-adenosyl-L-methionine = 2-methyladenosine(37) in tRNA + 5'-deoxyadenosine + L-methionine + 2 oxidized [2Fe-2S]-[ferredoxin] + S-adenosyl-L-homocysteine. Functionally, specifically methylates position 2 of adenine 2503 in 23S rRNA and position 2 of adenine 37 in tRNAs. m2A2503 modification seems to play a crucial role in the proofreading step occurring at the peptidyl transferase center and thus would serve to optimize ribosomal fidelity. The chain is Dual-specificity RNA methyltransferase RlmN from Agrobacterium fabrum (strain C58 / ATCC 33970) (Agrobacterium tumefaciens (strain C58)).